Consider the following 667-residue polypeptide: Probable potassium transport system protein Kup (667 aa).

12 helical membrane-spanning segments follow: residues 16–36, 58–78, 101–121, 146–166, 167–187, 221–241, 253–273, 294–314, 343–363, 373–393, 399–419, and 424–444; these read GFII…LYTM, VSLI…LIAL, WLII…ALTP, TNVI…QRFG, TGVI…VLGI, IFIL…YSDL, WPFV…WILA, VYLV…LISG, LYIP…VLYF, YGLA…YYLI, PLLA…FFLA, and FMHG…VMVI.

It belongs to the HAK/KUP transporter (TC 2.A.72) family.

It localises to the cell membrane. The catalysed reaction is K(+)(in) + H(+)(in) = K(+)(out) + H(+)(out). In terms of biological role, transport of potassium into the cell. Likely operates as a K(+):H(+) symporter. This is Probable potassium transport system protein Kup from Streptococcus equi subsp. equi (strain 4047).